The chain runs to 407 residues: Inactive non-canonical poly(A) RNA polymerase protein Trf4-2 (407 aa).

Aspartate 85 and aspartate 87 together coordinate Mg(2+). Positions 221 to 280 (LALLLIQFLDYYGRKFDFFKYGISVLGQGGCVEKARLRSTLGENNWQSVLCIEDPVTPTN) constitute a PAP-associated domain. A disordered region spans residues 354-390 (LVQPSPTGSTSPSASASASEDERSGGPATIGFGRCDD). Residues 357 to 371 (PSPTGSTSPSASASA) show a composition bias toward low complexity.

Belongs to the DNA polymerase type-B-like family.

In Drosophila melanogaster (Fruit fly), this protein is Inactive non-canonical poly(A) RNA polymerase protein Trf4-2.